The following is a 466-amino-acid chain: MIKVYNTLNKKKEEFIPLTPGEVKMYVCGPTVYNFFHIGNGRTFIVFDTIRRYFEYRGFKVDFVQNFTDIDDKMIKKANEEGTTVKKIGDTYIKEYYQDADALNIERATVNPRATEFIGEIIKFVKGLVDKGYAYEVDGDVYFSTKKFEGYGKLSGQNIEDLQSGARISVDERKKDPMDFAIWKAQKPGEPAWNSPWGMGRPGWHIECSCMAKKLLGETIDIHAGGSDLKFPHHENEIAQSEALTGEPFARYWLHSAFVNVNNEKMSKSLNNFFTAREILERYDADVIRFLMLSAHYRQQLNFSEDLLESAKASVERIYNAIGNLENLIDEVSREEMNEEEKAYLESLNKYKEKYIEKMDDDFNTADAITAIFDLIKDTNTNITIDSSKELAQKALELIRELGAPLGMFQKSTKGNLEEEIEALIAKRQQARKDRDFALADKIRDELKDRGIVLEDTPQGVRWKMI.

Cysteine 28 serves as a coordination point for Zn(2+). Positions 30–40 match the 'HIGH' region motif; the sequence is PTVYNFFHIGN. The Zn(2+) site is built by cysteine 208, histidine 233, and glutamate 237. The 'KMSKS' region signature appears at 265 to 269; the sequence is KMSKS. Lysine 268 serves as a coordination point for ATP.

It belongs to the class-I aminoacyl-tRNA synthetase family. In terms of assembly, monomer. The cofactor is Zn(2+).

It is found in the cytoplasm. It carries out the reaction tRNA(Cys) + L-cysteine + ATP = L-cysteinyl-tRNA(Cys) + AMP + diphosphate. This Clostridium perfringens (strain 13 / Type A) protein is Cysteine--tRNA ligase.